The sequence spans 1404 residues: DNA (cytosine-5)-methyltransferase 3 (1404 aa).

A compositionally biased stretch (basic residues) spans 1–10; the sequence is MKTKAGKQKK. A disordered region spans residues 1-35; the sequence is MKTKAGKQKKRSVDSDDDVSRERRPKRATSGTNFK. The span at 11 to 22 shows a compositional bias: basic and acidic residues; that stretch reads RSVDSDDDVSRE. Lysine 486 is covalently cross-linked (Glycyl lysine isopeptide (Lys-Gly) (interchain with G-Cter in ubiquitin)). 2 BAH domains span residues 614–748 and 788–929; these read RKMD…FSLP and IKYS…KKLP. The SAM-dependent MTase C5-type domain occupies 969–1402; it reads LATLDIFAGC…RKLKEALHLR (434 aa). Cysteine 1085 is an active-site residue.

The protein belongs to the class I-like SAM-binding methyltransferase superfamily. C5-methyltransferase family.

It localises to the nucleus. The catalysed reaction is a 2'-deoxycytidine in DNA + S-adenosyl-L-methionine = a 5-methyl-2'-deoxycytidine in DNA + S-adenosyl-L-homocysteine + H(+). Functionally, maintains chromatin CpG methylation that plays a role in genomic imprinting, regulation of embryogenesis and seed viability. Required for proper patterns of CG DNA methylation in dividing cells. Required during the endosperm development in seeds. In Arabidopsis thaliana (Mouse-ear cress), this protein is DNA (cytosine-5)-methyltransferase 3 (MET3).